We begin with the raw amino-acid sequence, 215 residues long: MKTVLLTGFDPFGGESINPAWEVAKSLHEKTIGEYKIISKQVPTVFHKSISVLKEYIEELAPECIICIGQAGGRPDITIERVAINIDDARIADNEGNQPVDVPVVEEGPAAYWSTLPMKAIVKKLQEEGIPASVSQTAGTFVCNHLFYGLMHELEKHDTKMKGGFIHIPFLPEQASNYPGQPSMSLSTIRKGIELAVEVTTTVEVDIVEIGGATH.

Catalysis depends on residues Glu-80, Cys-143, and His-167.

This sequence belongs to the peptidase C15 family. In terms of assembly, homotetramer.

Its subcellular location is the cytoplasm. The enzyme catalyses Release of an N-terminal pyroglutamyl group from a polypeptide, the second amino acid generally not being Pro.. Removes 5-oxoproline from various penultimate amino acid residues except L-proline. This Bacillus cereus (strain AH820) protein is Pyrrolidone-carboxylate peptidase.